Consider the following 185-residue polypeptide: Ribosome maturation factor RimP (185 aa).

This sequence belongs to the RimP family.

The protein localises to the cytoplasm. Its function is as follows. Required for maturation of 30S ribosomal subunits. The polypeptide is Ribosome maturation factor RimP (Magnetococcus marinus (strain ATCC BAA-1437 / JCM 17883 / MC-1)).